The primary structure comprises 428 residues: Adenylosuccinate synthetase (428 aa).

Residues 12-18 (GDEGKGK) and 40-42 (GHT) each bind GTP. Catalysis depends on D13, which acts as the Proton acceptor. Mg(2+) is bound by residues D13 and G40. Residues 13–16 (DEGK), 38–41 (NAGH), T128, R142, Q223, T238, and R302 contribute to the IMP site. Catalysis depends on H41, which acts as the Proton donor. Residue 298–304 (VTTGRPR) participates in substrate binding. GTP-binding positions include R304, 330 to 332 (KLD), and 412 to 414 (GTG).

It belongs to the adenylosuccinate synthetase family. As to quaternary structure, homodimer. Requires Mg(2+) as cofactor.

It is found in the cytoplasm. The enzyme catalyses IMP + L-aspartate + GTP = N(6)-(1,2-dicarboxyethyl)-AMP + GDP + phosphate + 2 H(+). It participates in purine metabolism; AMP biosynthesis via de novo pathway; AMP from IMP: step 1/2. Plays an important role in the de novo pathway of purine nucleotide biosynthesis. Catalyzes the first committed step in the biosynthesis of AMP from IMP. This Bifidobacterium animalis subsp. lactis (strain AD011) protein is Adenylosuccinate synthetase.